Here is a 267-residue protein sequence, read N- to C-terminus: Phosphatidylserine decarboxylase proenzyme (267 aa).

Catalysis depends on charge relay system; for autoendoproteolytic cleavage activity residues D78, H132, and S236. S236 functions as the Schiff-base intermediate with substrate; via pyruvic acid; for decarboxylase activity in the catalytic mechanism. S236 carries the post-translational modification Pyruvic acid (Ser); by autocatalysis.

The protein belongs to the phosphatidylserine decarboxylase family. PSD-B subfamily. Prokaryotic type I sub-subfamily. Heterodimer of a large membrane-associated beta subunit and a small pyruvoyl-containing alpha subunit. The cofactor is pyruvate. Post-translationally, is synthesized initially as an inactive proenzyme. Formation of the active enzyme involves a self-maturation process in which the active site pyruvoyl group is generated from an internal serine residue via an autocatalytic post-translational modification. Two non-identical subunits are generated from the proenzyme in this reaction, and the pyruvate is formed at the N-terminus of the alpha chain, which is derived from the carboxyl end of the proenzyme. The autoendoproteolytic cleavage occurs by a canonical serine protease mechanism, in which the side chain hydroxyl group of the serine supplies its oxygen atom to form the C-terminus of the beta chain, while the remainder of the serine residue undergoes an oxidative deamination to produce ammonia and the pyruvoyl prosthetic group on the alpha chain. During this reaction, the Ser that is part of the protease active site of the proenzyme becomes the pyruvoyl prosthetic group, which constitutes an essential element of the active site of the mature decarboxylase.

The protein localises to the cell membrane. It catalyses the reaction a 1,2-diacyl-sn-glycero-3-phospho-L-serine + H(+) = a 1,2-diacyl-sn-glycero-3-phosphoethanolamine + CO2. It participates in phospholipid metabolism; phosphatidylethanolamine biosynthesis; phosphatidylethanolamine from CDP-diacylglycerol: step 2/2. Catalyzes the formation of phosphatidylethanolamine (PtdEtn) from phosphatidylserine (PtdSer). This is Phosphatidylserine decarboxylase proenzyme from Helicobacter pylori (strain ATCC 700392 / 26695) (Campylobacter pylori).